Reading from the N-terminus, the 178-residue chain is MRTLALSLGLALLCLLHAKAAATVPDRSEIAGKWYVVALASNTEFFLREKDKMKMAMARISFLGEDELKVSYAVPKPNGCRKWETTFKKTSDDGEVYYSEEAKKKVEVLDTDYKSYAVIYATRVKDGRTLHMMRLYSRSPEVSPAATAIFRKLAGERNYTDEMVAMLPRQEECTVDEV.

Positions 1–20 are cleaved as a signal peptide; that stretch reads MRTLALSLGLALLCLLHAKA. Position 43 (T43) interacts with enterobactin. Residues Y72 and K104 each coordinate 1-tetradecanoyl-sn-glycerol 3-phosphate. C80 and C173 are disulfide-bonded. K104, R123, and R134 together coordinate enterobactin. Residue 134-136 participates in 1-tetradecanoyl-sn-glycerol 3-phosphate binding; it reads RLY.

It belongs to the calycin superfamily. Lipocalin family. Monomer.

Its subcellular location is the secreted. Siderocalin-like lipocalin tightly binding a variety of bacterial ferric siderophores, also binds long-chain unsaturated fatty acids such as linoleic acid, oleic acid, arachidonic acid and, with a lower affinity, long chain saturated fatty acids such as steraic acid. May act as an antibacterial factor, through dual ligand specificity, both as a siderophore-sequestrating molecule and a lysophosphatidic acid (LPA) sensor. The chain is Extracellular fatty acid-binding protein from Coturnix japonica (Japanese quail).